The primary structure comprises 283 residues: Dihydropteroate synthase type-1 (283 aa).

The Pterin-binding domain maps to 6–262 (VTVFGILNLT…APGDLRSAIT (257 aa)). Residue N13 participates in Mg(2+) binding. (7,8-dihydropterin-6-yl)methyl diphosphate-binding positions include D86, N105, D177, K216, and 250-252 (RTH).

Belongs to the DHPS family. Homodimer or homotrimer. The cofactor is Mg(2+).

It catalyses the reaction (7,8-dihydropterin-6-yl)methyl diphosphate + 4-aminobenzoate = 7,8-dihydropteroate + diphosphate. The protein operates within cofactor biosynthesis; tetrahydrofolate biosynthesis; 7,8-dihydrofolate from 2-amino-4-hydroxy-6-hydroxymethyl-7,8-dihydropteridine diphosphate and 4-aminobenzoate: step 1/2. Functionally, catalyzes the condensation of para-aminobenzoate (pABA) with 6-hydroxymethyl-7,8-dihydropterin diphosphate (DHPt-PP) to form 7,8-dihydropteroate (H2Pte), the immediate precursor of folate derivatives. Implicated in resistance to sulfonamide. This Mycolicibacterium fortuitum (Mycobacterium fortuitum) protein is Dihydropteroate synthase type-1 (sulI).